The chain runs to 317 residues: MNGHLPVMLGEVCQLIEPVLGIGDVFIDATLGAGGHSEAILMSSQGALLYGIDRDAYALALARKRLSGFADRCKFVHDTFDKFDKYLSNLHPKVFLFDLGMSSMQIDNPDRGFSYMKSGPLDMRMNESDKITAKEILNGYSETALIRIFRDYGQERYAKRIARQICKARSVSELVTTCQVSQLIRDVCPPHIRKGHPAKRVFQALRIEVNSELLFLRTALEKALDLLQVGGRIVVLSYHSLEDRIVKHLFRSVSVSQLPKGFYINKDPEYKLIGKDLKNPKETEIANNPRASSAHLRAVERVHSHSQAEAQIVEPRA.

Residues Gly-34 to His-36, Asp-53, Phe-80, Asp-98, and Gln-105 contribute to the S-adenosyl-L-methionine site.

The protein belongs to the methyltransferase superfamily. RsmH family.

It localises to the cytoplasm. It carries out the reaction cytidine(1402) in 16S rRNA + S-adenosyl-L-methionine = N(4)-methylcytidine(1402) in 16S rRNA + S-adenosyl-L-homocysteine + H(+). Functionally, specifically methylates the N4 position of cytidine in position 1402 (C1402) of 16S rRNA. This Tropheryma whipplei (strain TW08/27) (Whipple's bacillus) protein is Ribosomal RNA small subunit methyltransferase H.